The sequence spans 343 residues: Flavone 3'-O-methyltransferase OMT1 (343 aa).

(E)-ferulate is bound at residue asparagine 107. 6 residues coordinate S-adenosyl-L-homocysteine: glycine 184, aspartate 207, aspartate 227, methionine 228, methionine 240, and lysine 241. Histidine 245 functions as the Proton acceptor in the catalytic mechanism. (E)-5-hydroxyferulate is bound at residue aspartate 246. Residues glutamate 273 and glutamate 305 contribute to the active site.

The protein belongs to the class I-like SAM-binding methyltransferase superfamily. Cation-independent O-methyltransferase family. COMT subfamily. Homodimer.

The catalysed reaction is (E)-5-hydroxyferulate + S-adenosyl-L-methionine = (E)-sinapate + S-adenosyl-L-homocysteine + H(+). It carries out the reaction luteolin + S-adenosyl-L-methionine = chrysoeriol + S-adenosyl-L-homocysteine + H(+). The enzyme catalyses quercetin + S-adenosyl-L-methionine = isorhamnetin + S-adenosyl-L-homocysteine + H(+). It catalyses the reaction (E)-caffeate + S-adenosyl-L-methionine = (E)-ferulate + S-adenosyl-L-homocysteine + H(+). The catalysed reaction is a 3'-hydroxyflavone + S-adenosyl-L-methionine = a 3'-methoxyflavone + S-adenosyl-L-homocysteine + H(+). Its pathway is flavonoid metabolism. In terms of biological role, catalyzes the 3'-O-methylation of the flavonoids luteolin and quercetin. Catalyzes the 3- of 5-O-methylation of the phenylpropanoids caffeate and 5-hydroxyferulate. Substrate preference is 5-hydroxyferulate &gt; luteolin &gt; quercetin &gt; caffeate. Apigenin, kempferol and 3,4-dimethylquercetin do not seem to be substrates for methylation. This chain is Flavone 3'-O-methyltransferase OMT1, found in Chrysosplenium americanum (American golden saxifrage).